The chain runs to 289 residues: Borealin (289 aa).

A required for interaction with INCENP region spans residues 1 to 58 (MAPKKRSSRGTRTNTLRSRKLASFLKDFDREVQVRTKQIESDRQTLLKEVENLYNIEI). Residues 1-88 (MAPKKRSSRG…NKQALEEAAK (88 aa)) form a required for centromere localization region. The required for interaction with SENP3 stretch occupies residues 1 to 150 (MAPKKRSSRG…KKSHKNLRSA (150 aa)). The tract at residues 10–109 (GTRTNTLRSR…TAEAIQTPLK (100 aa)) is required to form a minimal CPC core complex that localizes to the central spindle and midbody and properly executes the role of the CPC during cytokinesis. The segment at 20–78 (KLASFLKDFDREVQVRTKQIESDRQTLLKEVENLYNIEILRLPKALQGMKWLDYFALGG) is required for interaction with INCENP and BIRC5. At arginine 91 the chain carries Citrulline. Threonine 94 is modified (phosphothreonine; by TTK). Threonine 106 is modified (phosphothreonine). Serine 110 is subject to Phosphoserine. The tract at residues 122 to 173 (SIKEEEEEEEEGGGGGGRTKKSHKNLRSAKVKRCLPSKKRTQSIQGRGRSKR) is disordered. A compositionally biased stretch (acidic residues) spans 123–133 (IKEEEEEEEEG). A compositionally biased stretch (basic residues) spans 139–162 (RTKKSHKNLRSAKVKRCLPSKKRT). Lysine 145 participates in a covalent cross-link: Glycyl lysine isopeptide (Lys-Gly) (interchain with G-Cter in SUMO2). Serine 175 carries the phosphoserine modification. 2 positions are modified to phosphothreonine: threonine 198 and threonine 213. A phosphoserine mark is found at serine 228, serine 233, serine 247, and serine 253.

Belongs to the borealin family. May form homooligomers and homodimers. Component of the chromosomal passenger complex (CPC) composed of at least BIRC5/survivin, CDCA8/borealin, INCENP, AURKB or AURKC; in the complex forms a triple-helix bundle-based subcomplex with INCENP and BIRC5. Interacts with SENP3, UBE2I and RANBP2. Interacts (phosphorylated) with SGO1 and SGO2A; the association is dependent on CDK1. Phosphorylated by TTK, essentially at Thr-94. Phosphorylation (probably by CDK1) promotes targeting of the CPC to centromeric DNA. Post-translationally, sumoylated by UBE2I and RANBP2. Desumoylated by SENP3 through the removal of SUMO2 and SUMO3. In terms of processing, citrullinated by PADI4.

The protein resides in the nucleus. It is found in the nucleolus. It localises to the cytoplasm. Its subcellular location is the chromosome. The protein localises to the centromere. The protein resides in the cytoskeleton. It is found in the spindle. Component of the chromosomal passenger complex (CPC), a complex that acts as a key regulator of mitosis. The CPC complex has essential functions at the centromere in ensuring correct chromosome alignment and segregation and is required for chromatin-induced microtubule stabilization and spindle assembly. In the complex, it may be required to direct the CPC to centromeric DNA. Major effector of the TTK kinase in the control of attachment-error-correction and chromosome alignment. The chain is Borealin (Cdca8) from Mus musculus (Mouse).